The primary structure comprises 520 residues: DEP domain-containing protein 7 (520 aa).

One can recognise a DEP domain in the interval 45 to 137; the sequence is ALTQVEVKKR…SSCSLYRFIN (93 aa). The segment at 148–167 is disordered; sequence KSNGRCTPQRPKHSSFQSAP.

It belongs to the DEPDC7 family.

This Xenopus tropicalis (Western clawed frog) protein is DEP domain-containing protein 7 (depdc7).